The chain runs to 353 residues: Draxin-B (353 aa).

The N-terminal stretch at Met-1–Ser-21 is a signal peptide. Disordered regions lie at residues Glu-23–Ser-183, Thr-198–Val-222, and Val-246–Val-268. Basic residues predominate over residues Gly-138–Lys-167. Residues Ser-252–Lys-261 show a composition bias toward basic residues. 2 N-linked (GlcNAc...) asparagine glycosylation sites follow: Asn-262 and Asn-267.

The protein belongs to the draxin family.

It localises to the secreted. Functionally, chemorepulsive axon guidance protein required for the development of spinal cord and forebrain commissures. Acts as a chemorepulsive guidance protein for commissural axons during development. Able to inhibit or repel neurite outgrowth from dorsal spinal cord. The polypeptide is Draxin-B (draxin-B) (Salmo salar (Atlantic salmon)).